Here is a 415-residue protein sequence, read N- to C-terminus: Serine/threonine transporter SstT (415 aa).

8 helical membrane passes run 21-41 (ILLGLAAGIILASLSTQAALA), 45-65 (LGTLFVGALKAVAPILVLVLV), 85-105 (FLYLIGTFSAALIAVVLSVLF), 142-162 (ALLNANYIGILVWAVGLGIAF), 193-213 (LGIFGLVASTLAETGFGALWG), 217-237 (LLMVLIGGMLLVALVVNPLIV), 289-309 (VAIPLGATINMAGAAITITVL), and 331-351 (VVASLCACGASGVAGGSLLLI).

Belongs to the dicarboxylate/amino acid:cation symporter (DAACS) (TC 2.A.23) family.

It is found in the cell inner membrane. The enzyme catalyses L-serine(in) + Na(+)(in) = L-serine(out) + Na(+)(out). The catalysed reaction is L-threonine(in) + Na(+)(in) = L-threonine(out) + Na(+)(out). Its function is as follows. Involved in the import of serine and threonine into the cell, with the concomitant import of sodium (symport system). The protein is Serine/threonine transporter SstT of Pectobacterium atrosepticum (strain SCRI 1043 / ATCC BAA-672) (Erwinia carotovora subsp. atroseptica).